The chain runs to 265 residues: Shikimate dehydrogenase (NADP(+)) (265 aa).

Residues 15–17 (SLS) and T62 each bind shikimate. K66 acts as the Proton acceptor in catalysis. Residues N87 and D102 each contribute to the shikimate site. Residues 125-129 (GAGGA), 149-154 (NRTLEK), and L209 contribute to the NADP(+) site. Y211 serves as a coordination point for shikimate. Position 233 (G233) interacts with NADP(+).

The protein belongs to the shikimate dehydrogenase family. In terms of assembly, homodimer.

The catalysed reaction is shikimate + NADP(+) = 3-dehydroshikimate + NADPH + H(+). The protein operates within metabolic intermediate biosynthesis; chorismate biosynthesis; chorismate from D-erythrose 4-phosphate and phosphoenolpyruvate: step 4/7. Its function is as follows. Involved in the biosynthesis of the chorismate, which leads to the biosynthesis of aromatic amino acids. Catalyzes the reversible NADPH linked reduction of 3-dehydroshikimate (DHSA) to yield shikimate (SA). This chain is Shikimate dehydrogenase (NADP(+)), found in Legionella pneumophila subsp. pneumophila (strain Philadelphia 1 / ATCC 33152 / DSM 7513).